A 113-amino-acid chain; its full sequence is MHELSLCESVIETIMDNVRTHHFSQVRRVRLTVGRFAGVETEALRFSFDVVARGTLVEGAELELLEEPGAAWCFDCSETVPLMDRLDPCPRCGGTRLHPTAGTDVMIKDLEVI.

His-2 lines the Ni(2+) pocket. Zn(2+) contacts are provided by Cys-73, Cys-76, Cys-89, and Cys-92.

It belongs to the HypA/HybF family.

Its function is as follows. Involved in the maturation of [NiFe] hydrogenases. Required for nickel insertion into the metal center of the hydrogenase. This Beijerinckia indica subsp. indica (strain ATCC 9039 / DSM 1715 / NCIMB 8712) protein is Hydrogenase maturation factor HypA.